We begin with the raw amino-acid sequence, 293 residues long: Lysosomal amino acid transporter 1 homolog (293 aa).

Residues 1-37 (MVWRTLGASNFSTCPNGSVQWIWDVFGECAQDGWDEA) lie on the Lumenal side of the membrane. N-linked (GlcNAc...) asparagine glycans are attached at residues N10 and N16. A PQ-loop 1 domain is found at 34-100 (WDEASVGLGL…LADQLPLQTY (67 aa)). Residues 38–58 (SVGLGLVSILCFAASTFPQYI) form a helical membrane-spanning segment. Residues 59–71 (KACKTGNMDQALS) are Cytoplasmic-facing. The chain crosses the membrane as a helical span at residues 72–92 (LWFLLGWIGGDSCNLIGSFLA). At 93–96 (DQLP) the chain is on the lumenal side. A helical transmembrane segment spans residues 97–117 (LQTYTAVYYVLADLMMLTLYF). Over 118 to 127 (HYKFKKRPSP) the chain is Cytoplasmic. Residues 128-148 (LSAPINSVLLFILGTVCITPL) form a helical membrane-spanning segment. Over 149–182 (LSSTDPVAVPREGFRGRTLLSVEPGNKPFTKKEV) the chain is Lumenal. The chain crosses the membrane as a helical span at residues 183-203 (IGFVIGSASSLLYLLSRLPQI). The PQ-loop 2 domain occupies 191–243 (SSLLYLLSRLPQIRTNFIRQSTQGISYSLFALVMLGNTLYGLSVLLKNPEVGQ). The Cytoplasmic portion of the chain corresponds to 204–214 (RTNFIRQSTQG). Residues 215 to 235 (ISYSLFALVMLGNTLYGLSVL) form a helical membrane-spanning segment. The Lumenal segment spans residues 236 to 254 (LKNPEVGQSEGSYLLHHLP). A helical transmembrane segment spans residues 255 to 275 (WLVGSLGVLLLDTIISIQFLV). Topologically, residues 276–293 (YRSHETAAASEREPLLPS) are cytoplasmic. The short motif at 290–291 (LL) is the Di-leucine motif element.

Belongs to the laat-1 family. As to expression, ubiquitously expressed.

Its subcellular location is the lysosome membrane. Functionally, amino acid transporter that specifically mediates the pH-dependent export of the cationic amino acids arginine, histidine and lysine from lysosomes. The sequence is that of Lysosomal amino acid transporter 1 homolog from Mus musculus (Mouse).